Consider the following 1020-residue polypeptide: RNA-binding protein 44 (1020 aa).

Disordered regions lie at residues 1–23 and 50–70; these read MQAT…GHLQ and DGEG…NSSV. The span at 58-70 shows a compositional bias: basic and acidic residues; the sequence is TDERTNVKENSSV. Residues serine 249, serine 371, serine 374, serine 516, serine 683, and serine 690 each carry the phosphoserine modification. The RRM domain occupies 796-870; sequence FLIHVGGLCP…KSVNVRLVKI (75 aa).

Homodimer. Interacts with TEX14.

Its subcellular location is the cytoplasm. Functionally, component of intercellular bridges during meiosis. Intercellular bridges are evolutionarily conserved structures that connect differentiating germ cells. Not required for fertility. This Rattus norvegicus (Rat) protein is RNA-binding protein 44 (Rbm44).